Here is a 466-residue protein sequence, read N- to C-terminus: UDP-N-acetylmuramoylalanine--D-glutamate ligase (466 aa).

121–127 (GTNGKST) provides a ligand contact to ATP.

It belongs to the MurCDEF family.

Its subcellular location is the cytoplasm. The enzyme catalyses UDP-N-acetyl-alpha-D-muramoyl-L-alanine + D-glutamate + ATP = UDP-N-acetyl-alpha-D-muramoyl-L-alanyl-D-glutamate + ADP + phosphate + H(+). The protein operates within cell wall biogenesis; peptidoglycan biosynthesis. Its function is as follows. Cell wall formation. Catalyzes the addition of glutamate to the nucleotide precursor UDP-N-acetylmuramoyl-L-alanine (UMA). This Bradyrhizobium diazoefficiens (strain JCM 10833 / BCRC 13528 / IAM 13628 / NBRC 14792 / USDA 110) protein is UDP-N-acetylmuramoylalanine--D-glutamate ligase.